Here is a 228-residue protein sequence, read N- to C-terminus: MTQDELKALVAQAAADYVKQEVPEGAVLGVGTGSTANLFIDAVAAFKERFAGAVSSSEASTRRLQQHGFKVLDLNEVDEIPVYVDGADEIDASGAMIKGGGGALTREKIVASVAKRFVCIADGSKLVQTMGTFPLPVEVIPMARAAVARKLQALGGQPRLRMTKEGGIYKTDNGNVILDVAGLKIDDPRGLEQAVNQVPGVVTVGLFALRGADVLLLGTGDGVQRTDY.

Substrate-binding positions include 32–35 (TGST), 85–88 (DGAD), and 98–101 (KGGG). Glu-107 functions as the Proton acceptor in the catalytic mechanism. Residue Lys-125 participates in substrate binding.

The protein belongs to the ribose 5-phosphate isomerase family. In terms of assembly, homodimer.

It carries out the reaction aldehydo-D-ribose 5-phosphate = D-ribulose 5-phosphate. It participates in carbohydrate degradation; pentose phosphate pathway; D-ribose 5-phosphate from D-ribulose 5-phosphate (non-oxidative stage): step 1/1. Functionally, catalyzes the reversible conversion of ribose-5-phosphate to ribulose 5-phosphate. This chain is Ribose-5-phosphate isomerase A, found in Cupriavidus necator (strain ATCC 17699 / DSM 428 / KCTC 22496 / NCIMB 10442 / H16 / Stanier 337) (Ralstonia eutropha).